Reading from the N-terminus, the 980-residue chain is Putative leucine-rich repeat receptor-like serine/threonine-protein kinase At2g24130 (980 aa).

The first 20 residues, methionine 1 to alanine 20, serve as a signal peptide directing secretion. At serine 21 to serine 593 the chain is on the extracellular side. 2 N-linked (GlcNAc...) asparagine glycosylation sites follow: asparagine 55 and asparagine 88. LRR repeat units follow at residues serine 65–leucine 89, threonine 90–leucine 113, glutamate 115–leucine 138, asparagine 139–asparagine 162, serine 165–histidine 189, lysine 191–serine 214, threonine 215–lysine 238, and proline 240–proline 263. N-linked (GlcNAc...) asparagine glycans are attached at residues asparagine 152, asparagine 162, asparagine 175, and asparagine 213. Residues asparagine 257 and asparagine 270 are each glycosylated (N-linked (GlcNAc...) asparagine). LRR repeat units follow at residues serine 271–leucine 295, serine 296–leucine 320, asparagine 322–leucine 344, serine 345–arginine 370, glycine 372–asparagine 391, leucine 392–cysteine 416, isoleucine 417–asparagine 440, arginine 442–leucine 463, serine 464–cysteine 490, isoleucine 491–leucine 514, proline 515–glutamine 537, and serine 539–lysine 563. Asparagine 322 and asparagine 327 each carry an N-linked (GlcNAc...) asparagine glycan. 2 N-linked (GlcNAc...) asparagine glycosylation sites follow: asparagine 380 and asparagine 391. N-linked (GlcNAc...) asparagine glycans are attached at residues asparagine 428 and asparagine 449. N-linked (GlcNAc...) asparagine glycosylation occurs at asparagine 497. Residues asparagine 545 and asparagine 554 are each glycosylated (N-linked (GlcNAc...) asparagine). A helical membrane pass occupies residues valine 594 to proline 614. Over leucine 615–serine 980 the chain is Cytoplasmic. Phosphothreonine is present on threonine 658. The 300-residue stretch at phenylalanine 661–leucine 960 folds into the Protein kinase domain. ATP contacts are provided by residues isoleucine 667–valine 675 and lysine 689. Tyrosine 775 carries the post-translational modification Phosphotyrosine. Aspartate 788 functions as the Proton acceptor in the catalytic mechanism. Tyrosine 841 is modified (phosphotyrosine).

This sequence belongs to the protein kinase superfamily. Ser/Thr protein kinase family.

Its subcellular location is the cell membrane. It carries out the reaction L-seryl-[protein] + ATP = O-phospho-L-seryl-[protein] + ADP + H(+). The catalysed reaction is L-threonyl-[protein] + ATP = O-phospho-L-threonyl-[protein] + ADP + H(+). This Arabidopsis thaliana (Mouse-ear cress) protein is Putative leucine-rich repeat receptor-like serine/threonine-protein kinase At2g24130.